A 445-amino-acid polypeptide reads, in one-letter code: 6-phosphogluconate dehydrogenase, decarboxylating (445 aa).

NADP(+)-binding positions include 1–4 (AVMG), 22–24 (NRS), 63–65 (VKA), and Asn91. Substrate contacts are provided by residues Asn91 and 117-119 (SGG). Lys172 functions as the Proton acceptor in the catalytic mechanism. Residue 175–176 (HN) participates in substrate binding. Glu179 (proton donor) is an active-site residue. Substrate is bound by residues Tyr180, Lys249, Arg276, Arg434, and His440.

The protein belongs to the 6-phosphogluconate dehydrogenase family. As to quaternary structure, homodimer.

It carries out the reaction 6-phospho-D-gluconate + NADP(+) = D-ribulose 5-phosphate + CO2 + NADPH. It functions in the pathway carbohydrate degradation; pentose phosphate pathway; D-ribulose 5-phosphate from D-glucose 6-phosphate (oxidative stage): step 3/3. In terms of biological role, catalyzes the oxidative decarboxylation of 6-phosphogluconate to ribulose 5-phosphate and CO(2), with concomitant reduction of NADP to NADPH. This chain is 6-phosphogluconate dehydrogenase, decarboxylating (gnd), found in Shigella sonnei.